Here is a 282-residue protein sequence, read N- to C-terminus: Undecaprenyl-diphosphatase (282 aa).

The next 8 membrane-spanning stretches (helical) occupy residues 1 to 21 (MTLI…FLPI), 39 to 59 (PGAA…MLYF), 85 to 105 (AKMG…GLLF), 115 to 135 (SLYW…LAEW), 153 to 173 (IGWK…IPGS), 193 to 213 (AARF…AFEL), 229 to 249 (NLAV…AFLL), and 259 to 279 (IFIA…GGGT).

This sequence belongs to the UppP family.

Its subcellular location is the cell inner membrane. The catalysed reaction is di-trans,octa-cis-undecaprenyl diphosphate + H2O = di-trans,octa-cis-undecaprenyl phosphate + phosphate + H(+). In terms of biological role, catalyzes the dephosphorylation of undecaprenyl diphosphate (UPP). Confers resistance to bacitracin. This Chlorobium luteolum (strain DSM 273 / BCRC 81028 / 2530) (Pelodictyon luteolum) protein is Undecaprenyl-diphosphatase.